The chain runs to 286 residues: MVHPFNRIFGKSDKENIDTDEVEYSTDEVIQIKVDNIHPNRYQPRTIFQEEKIKELAQTIHTHGMIQPIVVRKLEDEDTYELIAGERRWRAVQHLGWEQVSAIIRDMTDTETASVALIENLQREELTVIEEAIAYSKLLELHSLTQEALAQRLGKNQSTVANKLRLLKLPEEVQTALLDKAISERHARALIKLKQEDQQIAVLHEILEKGLNVKQTEDRIAQINEPKEKKKPKPKFKGVNKDIRIAMNTIRQSLNMVSDTGVEVESDEKELDDYYQITIKIPKKNQ.

A DNA-binding region (H-T-H motif) is located at residues 147–166 (EALAQRLGKNQSTVANKLRL).

This sequence belongs to the ParB family.

It is found in the cytoplasm. The protein localises to the nucleoid. Effects nucleoid occlusion by binding relatively nonspecifically to DNA and preventing the assembly of the division machinery in the vicinity of the nucleoid, especially under conditions that disturb the cell cycle. It helps to coordinate cell division and chromosome segregation by preventing the formation of the Z ring through the nucleoid, which would cause chromosome breakage. This is Nucleoid occlusion protein from Oceanobacillus iheyensis (strain DSM 14371 / CIP 107618 / JCM 11309 / KCTC 3954 / HTE831).